The chain runs to 393 residues: Sedoheptulose-1,7-bisphosphatase, chloroplastic (393 aa).

Cys-115 and Cys-120 are oxidised to a cystine. Residues Asp-126, Glu-155, Asp-176, Leu-178, and Asp-179 each contribute to the Mg(2+) site. Residues 179–182, Tyr-290, and Lys-320 contribute to the substrate site; that span reads DGSS. Glu-326 provides a ligand contact to Mg(2+).

Belongs to the FBPase class 1 family. As to quaternary structure, homodimer. Requires Mg(2+) as cofactor.

The protein resides in the plastid. It is found in the chloroplast. The catalysed reaction is D-sedoheptulose 1,7-bisphosphate + H2O = D-sedoheptulose 7-phosphate + phosphate. It functions in the pathway carbohydrate biosynthesis; Calvin cycle. The chain is Sedoheptulose-1,7-bisphosphatase, chloroplastic from Triticum aestivum (Wheat).